Reading from the N-terminus, the 291-residue chain is tRNA U34 carboxymethyltransferase (291 aa).

Carboxy-S-adenosyl-L-methionine is bound by residues Lys61, Trp75, Lys80, Gly100, 122–124 (DPS), Tyr169, and Arg284.

The protein belongs to the class I-like SAM-binding methyltransferase superfamily. CmoB family. Homotetramer.

The catalysed reaction is carboxy-S-adenosyl-L-methionine + 5-hydroxyuridine(34) in tRNA = 5-carboxymethoxyuridine(34) in tRNA + S-adenosyl-L-homocysteine + H(+). In terms of biological role, catalyzes carboxymethyl transfer from carboxy-S-adenosyl-L-methionine (Cx-SAM) to 5-hydroxyuridine (ho5U) to form 5-carboxymethoxyuridine (cmo5U) at position 34 in tRNAs. The sequence is that of tRNA U34 carboxymethyltransferase from Campylobacter lari (strain RM2100 / D67 / ATCC BAA-1060).